We begin with the raw amino-acid sequence, 300 residues long: 7-methylguanosine phosphate-specific 5'-nucleotidase (300 aa).

Catalysis depends on D41, which acts as the Nucleophile. Residues D41 and D43 each coordinate Mg(2+). Residue D43 is the Proton donor of the active site. Residue E88 participates in CMP binding. E88 contributes to the N(7)-methyl-GMP binding site. Residues 156–157 and K205 contribute to the substrate site; that span reads SA. D230 provides a ligand contact to Mg(2+). N6-acetyllysine is present on K256.

Belongs to the pyrimidine 5'-nucleotidase family. As to quaternary structure, monomer.

It is found in the cytoplasm. It carries out the reaction N(7)-methyl-GMP + H2O = N(7)-methylguanosine + phosphate. The catalysed reaction is CMP + H2O = cytidine + phosphate. The enzyme catalyses a ribonucleoside 5'-phosphate + H2O = a ribonucleoside + phosphate. Functionally, specifically hydrolyzes 7-methylguanosine monophosphate (m(7)GMP) to 7-methylguanosine and inorganic phosphate. The specific activity for m(7)GMP may protect cells against undesired salvage of m(7)GMP and its incorporation into nucleic acids. Also has weak activity for CMP. UMP and purine nucleotides are poor substrates. The chain is 7-methylguanosine phosphate-specific 5'-nucleotidase (Nt5c3b) from Rattus norvegicus (Rat).